A 148-amino-acid chain; its full sequence is Putative fusion protein (148 aa).

Residues 1–34 (MDRALSTFPGDDDETNERNINHREKTSGEHGHYE) are disordered. Residues 16–34 (NERNINHREKTSGEHGHYE) show a composition bias toward basic and acidic residues.

It belongs to the poxviruses fusion protein family. In terms of assembly, homotrimer, covalently linked.

The protein resides in the virion membrane. In Sheeppox virus (strain KS-1) (SPPV), this protein is Putative fusion protein.